We begin with the raw amino-acid sequence, 279 residues long: 3-methyl-2-oxobutanoate hydroxymethyltransferase (279 aa).

Residues Asp-44 and Asp-83 each contribute to the Mg(2+) site. 3-methyl-2-oxobutanoate contacts are provided by residues 44–45 (DS), Asp-83, and Lys-113. A Mg(2+)-binding site is contributed by Glu-115. Residue Glu-182 is the Proton acceptor of the active site.

It belongs to the PanB family. In terms of assembly, homodecamer; pentamer of dimers. Mg(2+) serves as cofactor.

The protein localises to the cytoplasm. It carries out the reaction 3-methyl-2-oxobutanoate + (6R)-5,10-methylene-5,6,7,8-tetrahydrofolate + H2O = 2-dehydropantoate + (6S)-5,6,7,8-tetrahydrofolate. Its pathway is cofactor biosynthesis; (R)-pantothenate biosynthesis; (R)-pantoate from 3-methyl-2-oxobutanoate: step 1/2. In terms of biological role, catalyzes the reversible reaction in which hydroxymethyl group from 5,10-methylenetetrahydrofolate is transferred onto alpha-ketoisovalerate to form ketopantoate. The polypeptide is 3-methyl-2-oxobutanoate hydroxymethyltransferase (Dehalococcoides mccartyi (strain ATCC BAA-2100 / JCM 16839 / KCTC 5957 / BAV1)).